Here is a 165-residue protein sequence, read N- to C-terminus: Growth arrest and DNA damage-inducible protein GADD45 alpha (165 aa).

The residue at position 2 (Thr-2) is a Phosphothreonine.

This sequence belongs to the GADD45 family. As to quaternary structure, interacts with AURKA, PCNA, GADD45GIP1 and MAPK14.

The protein localises to the nucleus. Might affect PCNA interaction with some CDK (cell division protein kinase) complexes; stimulates DNA excision repair in vitro and inhibits entry of cells into S phase. In T-cells, functions as a regulator of p38 MAPKs by inhibiting p88 phosphorylation and activity. The polypeptide is Growth arrest and DNA damage-inducible protein GADD45 alpha (GADD45A) (Cricetulus griseus (Chinese hamster)).